A 232-amino-acid chain; its full sequence is Phosphoglycolate phosphatase (232 aa).

The active-site Nucleophile is the aspartate 13. Mg(2+) is bound by residues aspartate 13, aspartate 15, and aspartate 175.

The protein belongs to the HAD-like hydrolase superfamily. CbbY/CbbZ/Gph/YieH family. As to quaternary structure, monomer. Mg(2+) is required as a cofactor. It depends on chloride as a cofactor.

It catalyses the reaction 2-phosphoglycolate + H2O = glycolate + phosphate. The protein operates within organic acid metabolism; glycolate biosynthesis; glycolate from 2-phosphoglycolate: step 1/1. Specifically catalyzes the dephosphorylation of 2-phosphoglycolate. Is involved in the dissimilation of the intracellular 2-phosphoglycolate formed during the DNA repair of 3'-phosphoglycolate ends, a major class of DNA lesions induced by oxidative stress. The protein is Phosphoglycolate phosphatase of Yersinia pseudotuberculosis serotype I (strain IP32953).